We begin with the raw amino-acid sequence, 141 residues long: Large ribosomal subunit protein uL6 (141 aa).

The protein belongs to the universal ribosomal protein uL6 family.

The sequence is that of Large ribosomal subunit protein uL6 from Haemonchus contortus (Barber pole worm).